The sequence spans 360 residues: Phospho-N-acetylmuramoyl-pentapeptide-transferase (360 aa).

10 consecutive transmembrane segments (helical) span residues 26-46 (AIVSLLTALFISLWMGPRMIA), 72-92 (PTMGGIMILTAITVSVLLWAY), 94-114 (SNPYVWCVLTVLIGYGIIGFV), 132-152 (WKYFWMSVIALGVAFALYLAG), 168-188 (VMPQLGLFYILLAYFVIVGTG), 199-219 (GLAIMPTVFVAAGFALVAWAT), 236-256 (AGELVIVCTAIVGAGLGFLWF), 263-283 (VFMGDVGSLALGGALGIIAVL), 288-308 (FLLVIMGGVFVVETLSVILQV), and 338-358 (VIVRFWIISLMLVLIGLATLK).

The protein belongs to the glycosyltransferase 4 family. MraY subfamily. The cofactor is Mg(2+).

Its subcellular location is the cell inner membrane. The catalysed reaction is UDP-N-acetyl-alpha-D-muramoyl-L-alanyl-gamma-D-glutamyl-meso-2,6-diaminopimeloyl-D-alanyl-D-alanine + di-trans,octa-cis-undecaprenyl phosphate = di-trans,octa-cis-undecaprenyl diphospho-N-acetyl-alpha-D-muramoyl-L-alanyl-D-glutamyl-meso-2,6-diaminopimeloyl-D-alanyl-D-alanine + UMP. Its pathway is cell wall biogenesis; peptidoglycan biosynthesis. Its function is as follows. Catalyzes the initial step of the lipid cycle reactions in the biosynthesis of the cell wall peptidoglycan: transfers peptidoglycan precursor phospho-MurNAc-pentapeptide from UDP-MurNAc-pentapeptide onto the lipid carrier undecaprenyl phosphate, yielding undecaprenyl-pyrophosphoryl-MurNAc-pentapeptide, known as lipid I. This chain is Phospho-N-acetylmuramoyl-pentapeptide-transferase, found in Klebsiella pneumoniae subsp. pneumoniae (strain ATCC 700721 / MGH 78578).